The sequence spans 163 residues: Putative 4-hydroxy-4-methyl-2-oxoglutarate aldolase (163 aa).

Substrate is bound by residues 76–79 (GDMI) and R98. Residue D99 participates in a divalent metal cation binding.

The protein belongs to the class II aldolase/RraA-like family. Homotrimer. A divalent metal cation is required as a cofactor.

The catalysed reaction is 4-hydroxy-4-methyl-2-oxoglutarate = 2 pyruvate. It carries out the reaction oxaloacetate + H(+) = pyruvate + CO2. In terms of biological role, catalyzes the aldol cleavage of 4-hydroxy-4-methyl-2-oxoglutarate (HMG) into 2 molecules of pyruvate. Also contains a secondary oxaloacetate (OAA) decarboxylase activity due to the common pyruvate enolate transition state formed following C-C bond cleavage in the retro-aldol and decarboxylation reactions. This Pseudomonas fluorescens (strain SBW25) protein is Putative 4-hydroxy-4-methyl-2-oxoglutarate aldolase.